The following is a 263-amino-acid chain: 4-hydroxy-tetrahydrodipicolinate reductase (263 aa).

NAD(+)-binding positions include 7–12, 96–98, and 122–125; these read GFKGRM, GTT, and APNF. The Proton donor/acceptor role is filled by His152. His153 is a (S)-2,3,4,5-tetrahydrodipicolinate binding site. The active-site Proton donor is Lys156. Position 162–163 (162–163) interacts with (S)-2,3,4,5-tetrahydrodipicolinate; it reads GT.

It belongs to the DapB family.

The protein resides in the cytoplasm. The enzyme catalyses (S)-2,3,4,5-tetrahydrodipicolinate + NAD(+) + H2O = (2S,4S)-4-hydroxy-2,3,4,5-tetrahydrodipicolinate + NADH + H(+). It catalyses the reaction (S)-2,3,4,5-tetrahydrodipicolinate + NADP(+) + H2O = (2S,4S)-4-hydroxy-2,3,4,5-tetrahydrodipicolinate + NADPH + H(+). Its pathway is amino-acid biosynthesis; L-lysine biosynthesis via DAP pathway; (S)-tetrahydrodipicolinate from L-aspartate: step 4/4. Functionally, catalyzes the conversion of 4-hydroxy-tetrahydrodipicolinate (HTPA) to tetrahydrodipicolinate. This Listeria welshimeri serovar 6b (strain ATCC 35897 / DSM 20650 / CCUG 15529 / CIP 8149 / NCTC 11857 / SLCC 5334 / V8) protein is 4-hydroxy-tetrahydrodipicolinate reductase.